The chain runs to 234 residues: Ribosomal RNA small subunit methyltransferase G (234 aa).

S-adenosyl-L-methionine-binding residues include G85, F90, and R155.

This sequence belongs to the methyltransferase superfamily. RNA methyltransferase RsmG family.

The protein resides in the cytoplasm. It carries out the reaction guanosine(527) in 16S rRNA + S-adenosyl-L-methionine = N(7)-methylguanosine(527) in 16S rRNA + S-adenosyl-L-homocysteine. In terms of biological role, specifically methylates the N7 position of guanine in position 527 of 16S rRNA. The chain is Ribosomal RNA small subunit methyltransferase G from Rhodopseudomonas palustris (strain BisB18).